The following is a 224-amino-acid chain: Cytidylate kinase (224 aa).

ATP is bound at residue 11–19 (GPAAAGKST).

The protein belongs to the cytidylate kinase family. Type 1 subfamily.

It localises to the cytoplasm. The enzyme catalyses CMP + ATP = CDP + ADP. It catalyses the reaction dCMP + ATP = dCDP + ADP. The protein is Cytidylate kinase of Listeria welshimeri serovar 6b (strain ATCC 35897 / DSM 20650 / CCUG 15529 / CIP 8149 / NCTC 11857 / SLCC 5334 / V8).